Consider the following 177-residue polypeptide: Large ribosomal subunit protein uL6 (177 aa).

Belongs to the universal ribosomal protein uL6 family. Part of the 50S ribosomal subunit.

Its function is as follows. This protein binds to the 23S rRNA, and is important in its secondary structure. It is located near the subunit interface in the base of the L7/L12 stalk, and near the tRNA binding site of the peptidyltransferase center. The chain is Large ribosomal subunit protein uL6 from Rhodopseudomonas palustris (strain BisA53).